The sequence spans 149 residues: Bis(5'-adenosyl)-triphosphatase (149 aa).

One can recognise an HIT domain in the interval 2–109 (SFRFGQHLIK…LPRKAGDFHR (108 aa)). Residues H8, N27, Q83, and 89 to 92 (GQTV) each bind substrate. Positions 94–98 (HVHVH) match the Histidine triad motif motif. H96 functions as the Tele-AMP-histidine intermediate in the catalytic mechanism. H98 serves as a coordination point for substrate. Phosphotyrosine is present on residues Y114 and Y147.

As to quaternary structure, homodimer. Interacts with UBE2I. Interacts with MDM2. Interacts with CTNNB1. Identified in a complex with CTNNB1 and LEF1. Phosphorylation at Tyr-114 by SRC is required for induction of apoptosis. As to expression, expressed in the brain, kidney, spleen, testis and lung.

The protein localises to the cytoplasm. It localises to the nucleus. The protein resides in the mitochondrion. The catalysed reaction is P(1),P(3)-bis(5'-adenosyl) triphosphate + H2O = AMP + ADP + 2 H(+). It catalyses the reaction adenosine 5'-phosphosulfate + H2O = sulfate + AMP + 2 H(+). It carries out the reaction adenosine 5'-phosphosulfate + NH4(+) = adenosine 5'-phosphoramidate + sulfate + 2 H(+). The enzyme catalyses adenosine 5'-phosphoramidate + H2O = AMP + NH4(+). Possesses dinucleoside triphosphate hydrolase activity. Cleaves P(1)-P(3)-bis(5'-adenosyl) triphosphate (Ap3A) to yield AMP and ADP. Can also hydrolyze P(1)-P(4)-bis(5'-adenosyl) tetraphosphate (Ap4A), but has extremely low activity with ATP. Exhibits adenylylsulfatase activity, hydrolyzing adenosine 5'-phosphosulfate to yield AMP and sulfate. Exhibits adenosine 5'-monophosphoramidase activity, hydrolyzing purine nucleotide phosphoramidates with a single phosphate group such as adenosine 5'monophosphoramidate (AMP-NH2) to yield AMP and NH2. Exhibits adenylylsulfate-ammonia adenylyltransferase, catalyzing the ammonolysis of adenosine 5'-phosphosulfate resulting in the formation of adenosine 5'-phosphoramidate. Also catalyzes the ammonolysis of adenosine 5-phosphorofluoridate and diadenosine triphosphate. Modulates transcriptional activation by CTNNB1 and thereby contributes to regulate the expression of genes essential for cell proliferation and survival, such as CCND1 and BIRC5. Plays a role in the induction of apoptosis via SRC and AKT1 signaling pathways. Inhibits MDM2-mediated proteasomal degradation of p53/TP53 and thereby plays a role in p53/TP53-mediated apoptosis. Induction of apoptosis depends on the ability of FHIT to bind P(1)-P(3)-bis(5'-adenosyl) triphosphate or related compounds, but does not require its catalytic activity Functions as a tumor suppressor. This is Bis(5'-adenosyl)-triphosphatase (FHIT) from Bos taurus (Bovine).